We begin with the raw amino-acid sequence, 275 residues long: Phosphate import ATP-binding protein PstB (275 aa).

An ABC transporter domain is found at 28 to 270 (MSAKNVSVFY…PREERTKDYI (243 aa)). 60 to 67 (GPSGCGKS) serves as a coordination point for ATP.

This sequence belongs to the ABC transporter superfamily. Phosphate importer (TC 3.A.1.7) family. The complex is composed of two ATP-binding proteins (PstB), two transmembrane proteins (PstC and PstA) and a solute-binding protein (PstS).

It localises to the cell inner membrane. It catalyses the reaction phosphate(out) + ATP + H2O = ADP + 2 phosphate(in) + H(+). In terms of biological role, part of the ABC transporter complex PstSACB involved in phosphate import. Responsible for energy coupling to the transport system. The polypeptide is Phosphate import ATP-binding protein PstB (Novosphingobium aromaticivorans (strain ATCC 700278 / DSM 12444 / CCUG 56034 / CIP 105152 / NBRC 16084 / F199)).